The following is a 333-amino-acid chain: Fructose-1,6-bisphosphatase class 1 (333 aa).

Mg(2+)-binding residues include E92, D113, L115, and D116. Residues 116–119 (DGSS), N209, Y242, and K272 each bind substrate. E278 serves as a coordination point for Mg(2+).

Belongs to the FBPase class 1 family. Homotetramer. Requires Mg(2+) as cofactor.

The protein resides in the cytoplasm. It catalyses the reaction beta-D-fructose 1,6-bisphosphate + H2O = beta-D-fructose 6-phosphate + phosphate. It functions in the pathway carbohydrate biosynthesis; Calvin cycle. The protein is Fructose-1,6-bisphosphatase class 1 of Chlorobium luteolum (strain DSM 273 / BCRC 81028 / 2530) (Pelodictyon luteolum).